We begin with the raw amino-acid sequence, 213 residues long: Putative transmembrane protein DDB_G0267860 (213 aa).

A signal peptide spans 1–22 (MKTKILLLNFIIIFFLINVNLA). Topologically, residues 23–191 (IKKDSPFKEI…SSKFDSSTSS (169 aa)) are extracellular. N-linked (GlcNAc...) asparagine glycosylation is found at N92 and N114. Residues 192 to 212 (ISINTLAILSLLFLIFINKLI) form a helical membrane-spanning segment. Residue N213 is a topological domain, cytoplasmic.

The protein localises to the membrane. The polypeptide is Putative transmembrane protein DDB_G0267860 (Dictyostelium discoideum (Social amoeba)).